The following is a 218-amino-acid chain: Thiopurine S-methyltransferase (218 aa).

S-adenosyl-L-methionine contacts are provided by tryptophan 10, leucine 45, glutamate 66, and arginine 123.

It belongs to the class I-like SAM-binding methyltransferase superfamily. TPMT family.

It is found in the cytoplasm. The enzyme catalyses S-adenosyl-L-methionine + a thiopurine = S-adenosyl-L-homocysteine + a thiopurine S-methylether.. This is Thiopurine S-methyltransferase from Shewanella amazonensis (strain ATCC BAA-1098 / SB2B).